We begin with the raw amino-acid sequence, 390 residues long: UPF0496 protein At1g20180 (390 aa).

Helical transmembrane passes span 228-248 (LGGYSLVITHSAIVITLLIIA) and 250-270 (HSILGVFAAPALLGLCSFCLL).

Belongs to the UPF0496 family.

It is found in the membrane. This is UPF0496 protein At1g20180 from Arabidopsis thaliana (Mouse-ear cress).